A 108-amino-acid polypeptide reads, in one-letter code: Con-Ins K1 (108 aa).

The N-terminal stretch at 1–24 (MTTSSYFLLVALGLLLYVCQSSFG) is a signal peptide. Residues 25-28 (SPHT) constitute a propeptide that is removed on maturation. Intrachain disulfides connect cysteine 41-cysteine 90, cysteine 53-cysteine 103, and cysteine 89-cysteine 94. Glutamate 44 is subject to 4-carboxyglutamate. Residues 57–83 (RKRRGFPSMLKARAKRNEAFLLQRDGR) constitute a propeptide, c peptide. Position 87 is a 4-carboxyglutamate (glutamate 87). A Glutamine amide modification is found at glutamine 107.

It belongs to the insulin family. In terms of assembly, heterodimer of A and B chains; disulfide-linked. Expressed by the venom gland.

It localises to the secreted. Functionally, this venom insulin, from a fish-hunting cone snail, facilitates prey capture by rapidly inducing hypoglycemic shock. It is one of the smallest known insulin found in nature and lacks the C-terminal segment of the B chain that, in human insulin, mediates engagement of the insulin receptor (INSR) and assembly of the hormone's hexameric storage form. Despite lacking this segment, it both binds and activates human insulin receptor (long isoform (HIR-B)) with a moderate potency (EC(50)=30.45 nM). In vivo, intraperitoneal injection of this peptide into zebrafish lowers blood glucose with a lower potency than human insulin. In addition, when applied to water, this peptide reduces overall locomotor activity of zebrafish larvae, observed as a significant decrease in the percentage of time spent swimming and movement frequency. When tested on a mouse model of diabetes, this insulin also lowers blood glucose with a 20-fold lower potency than human insulin. The polypeptide is Con-Ins K1 (Conus kinoshitai (Kinoshita's cone)).